A 226-amino-acid polypeptide reads, in one-letter code: NEDD8-specific protease 1 (226 aa).

Belongs to the peptidase C48 family.

Functionally, processes the pre-form of the ubiquitin-like protein NEDD8/RUB1. Has the capacity to discriminate between NEDD8/RUB1 and ubiquitin. Has no SUMO protease activity. The sequence is that of NEDD8-specific protease 1 (NEDP1) from Arabidopsis thaliana (Mouse-ear cress).